A 431-amino-acid polypeptide reads, in one-letter code: Histidine--tRNA ligase (431 aa).

Belongs to the class-II aminoacyl-tRNA synthetase family. Homodimer.

The protein resides in the cytoplasm. The catalysed reaction is tRNA(His) + L-histidine + ATP = L-histidyl-tRNA(His) + AMP + diphosphate + H(+). In Neisseria meningitidis serogroup C (strain 053442), this protein is Histidine--tRNA ligase.